Reading from the N-terminus, the 151-residue chain is uncharacterized protein (151 aa).

[4Fe-4S] cluster contacts are provided by Cys24, Cys27, Cys92, and Cys129.

It belongs to the complex I 20 kDa subunit family. [4Fe-4S] cluster is required as a cofactor.

This is an uncharacterized protein from Methanocaldococcus jannaschii (strain ATCC 43067 / DSM 2661 / JAL-1 / JCM 10045 / NBRC 100440) (Methanococcus jannaschii).